The chain runs to 1828 residues: Dedicator of cytokinesis protein 2 (1828 aa).

An SH3 domain is found at 8-69 (DKERHGVAIY…PTSFIHLKEV (62 aa)). An N6-acetyllysine modification is found at K304. In terms of domain architecture, C2 DOCK-type spans 423-607 (RNDIYITLLQ…DVFSISTLVC (185 aa)). 2 positions are modified to phosphoserine: S588 and S593. An N6-acetyllysine modification is found at K738. One can recognise a DOCKER domain in the interval 1210 to 1621 (YKDNNREEMY…VEKEYGVREM (412 aa)). The disordered stretch occupies residues 1652–1703 (SDCSTPSKVPAESFDLESAPPKTPKVEEEPISPGSTLPEVKLRRSKKRTKRS). Phosphoserine is present on residues S1683, S1704, S1729, and S1782.

This sequence belongs to the DOCK family. As to quaternary structure, homodimer. Interacts with RAC1 and RAC2. Interacts with CRKL and VAV. Interacts with CD3Z. As to expression, specifically expressed in hematopoietic cells.

It is found in the endomembrane system. Its subcellular location is the cytoplasm. The protein localises to the cytoskeleton. Functionally, involved in cytoskeletal rearrangements required for lymphocyte migration in response of chemokines. Activates RAC1 and RAC2, but not CDC42, by functioning as a guanine nucleotide exchange factor (GEF), which exchanges bound GDP for free GTP. May also participate in IL2 transcriptional activation via the activation of RAC2. This is Dedicator of cytokinesis protein 2 (Dock2) from Mus musculus (Mouse).